A 1250-amino-acid chain; its full sequence is Cell adhesion molecule-related/down-regulated by oncogenes (1250 aa).

An N-terminal signal peptide occupies residues 1–24; that stretch reads MHPDLGPLWTLLYVLVILCSSVSS. The Extracellular segment spans residues 25-962; the sequence is DLAPYFISEP…SPARSSDMLY (938 aa). Ig-like C2-type domains follow at residues 28–113, 119–203, 224–302, 309–395, and 404–515; these read PYFI…ATVS, DFDS…LKVE, PALS…KHVT, EHAS…GRLQ, and PVIV…AFLT. Cys-49 and Cys-96 are joined by a disulfide. N-linked (GlcNAc...) asparagine glycans are attached at residues Asn-99, Asn-179, Asn-286, Asn-293, Asn-341, and Asn-426. 2 disulfide bridges follow: Cys-140-Cys-190 and Cys-242-Cys-289. Disulfide bonds link Cys-332–Cys-379 and Cys-425–Cys-499. Residues 524–534 show a composition bias toward polar residues; that stretch reads KAESVTPSEAS. A disordered region spans residues 524 to 547; that stretch reads KAESVTPSEASQNDERDPQDGSES. A glycan (N-linked (GlcNAc...) asparagine) is linked at Asn-569. 3 Fibronectin type-III domains span residues 572–673, 719–814, and 822–922; these read VPDA…SKEK, APDR…VAGF, and PITG…TKVK. Asn-869 carries N-linked (GlcNAc...) asparagine glycosylation. Residues 929–951 are disordered; that stretch reads DYPVKELSTPPSSSGNAGNVGPA. Residues 963-983 traverse the membrane as a helical segment; it reads LIVGCVLGVMVLILMVFIALC. Over 984–1250 the chain is Cytoplasmic; it reads LWKSRQQSTI…SVVLQQAQET (267 aa). 2 disordered regions span residues 1178 to 1208 and 1223 to 1250; these read DNIS…AEDK and DCGE…AQET. Residues 1193–1208 show a composition bias toward basic and acidic residues; sequence EFSRGDSSGHSEAEDK.

As to quaternary structure, part of a complex that contains BOC, CDON, NEO1, cadherins and CTNNB1. Interacts with NTN3. Interacts with DHH, IHH and SHH. Post-translationally, N-glycosylated. As to expression, highly expressed in somites and the dorsal lips of the neural tube during embryogenesis. Detected at very low levels in adult tissues.

Its subcellular location is the cell membrane. Functionally, component of a cell-surface receptor complex that mediates cell-cell interactions between muscle precursor cells. Promotes differentiation of myogenic cells. Required for response to NTN3 and activation of NFATC3. In Mus musculus (Mouse), this protein is Cell adhesion molecule-related/down-regulated by oncogenes (Cdon).